The primary structure comprises 61 residues: uncharacterized protein (61 aa).

This is an uncharacterized protein from Methanocaldococcus jannaschii (strain ATCC 43067 / DSM 2661 / JAL-1 / JCM 10045 / NBRC 100440) (Methanococcus jannaschii).